The following is a 429-amino-acid chain: Actin-like protein 6A (429 aa).

Ser2 is modified (N-acetylserine). Residue Lys62 forms a Glycyl lysine isopeptide (Lys-Gly) (interchain with G-Cter in SUMO2) linkage. Phosphoserine is present on residues Ser86 and Ser233.

It belongs to the actin family. Component of numerous complexes with chromatin remodeling and histone acetyltransferase activity. Component of the NuA4 histone acetyltransferase complex which contains the catalytic subunit KAT5/TIP60 and the subunits EP400, TRRAP/PAF400, BRD8/SMAP, EPC1, DMAP1/DNMAP1, RUVBL1/TIP49, RUVBL2, ING3, actin, ACTL6A/BAF53A, MORF4L1/MRG15, MORF4L2/MRGX, MRGBP, YEATS4/GAS41, VPS72/YL1 and MEAF6. The NuA4 complex interacts with MYC and the adenovirus E1A protein. Component of a NuA4-related complex which contains EP400, TRRAP/PAF400, SRCAP, BRD8/SMAP, EPC1, DMAP1/DNMAP1, RUVBL1/TIP49, RUVBL2, actin, ACTL6A/BAF53A, VPS72 and YEATS4/GAS41. Component of the multiprotein chromatin-remodeling complexes SWI/SNF: SWI/SNF-A (BAF), SWI/SNF-B (PBAF) and related complexes. The canonical complex contains a catalytic subunit (either SMARCA4/BRG1/BAF190A or SMARCA2/BRM/BAF190B) and at least SMARCE1, ACTL6A/BAF53, SMARCC1/BAF155, SMARCC2/BAF170, and SMARCB1/SNF5/BAF47. Other subunits specific to each of the complexes may also be present permitting several possible combinations developmentally and tissue specific. Component of the BAF complex, which includes at least actin (ACTB), ARID1A/BAF250A, ARID1B/BAF250B, SMARCA2/BRM, SMARCA4/BRG1/BAF190A, ACTL6A/BAF53, ACTL6B/BAF53B, SMARCE1/BAF57, SMARCC1/BAF155, SMARCC2/BAF170, SMARCB1/SNF5/INI1, and one or more SMARCD1/BAF60A, SMARCD2/BAF60B, or SMARCD3/BAF60C. In muscle cells, the BAF complex also contains DPF3. Component of the BAF53 complex, at least composed of ACTL6A/BAF53A, RUVBL1/TIP49, SMARCA2/BRM/BAF190B and TRRAP/PAF400, and which may also include a HAT activity related to, but distinct from, that of KAT5. Component of neural progenitors-specific chromatin remodeling complex (npBAF complex) composed of at least, ARID1A/BAF250A or ARID1B/BAF250B, SMARCD1/BAF60A, SMARCD3/BAF60C, SMARCA2/BRM/BAF190B, SMARCA4/BRG1/BAF190A, SMARCB1/BAF47, SMARCC1/BAF155, SMARCE1/BAF57, SMARCC2/BAF170, PHF10/BAF45A, ACTL6A/BAF53A and actin. Component of SWI/SNF (GBAF) subcomplex, which includes at least BICRA or BICRAL (mutually exclusive), BRD9, SS18, SMARCA2/BRM, SMARCA4/BRG1/BAF190A, ACTL6A/BAF53, SMARCC1/BAF155, and SMARCD1/BAF60A. May be a component of the SWI/SNF-B (PBAF) chromatin remodeling complex, at least composed of SMARCA4/BRG1, SMARCB1/BAF47/SNF5, ACTL6A/BAF53A or ACTL6B/BAF53B, SMARCE1/BAF57, SMARCD1/BAF60A, SMARCD2/BAF60B, perhaps SMARCD3/BAF60C, SMARCC1/BAF155, SMARCC2/BAF170, PBRM1/BAF180, ARID2/BAF200 and actin. Interacts with SMARCA4/BRG1/BAF190A. Interacts with PHF10/BAF45A. Component of the chromatin remodeling INO80 complex; specifically part of a complex module associated with the DBINO domain of INO80. Interacts with DPF2. As to expression, widely expressed. Expressed selectively in neural stem and progenitor cells (at protein level).

Its subcellular location is the nucleus. In terms of biological role, involved in transcriptional activation and repression of select genes by chromatin remodeling (alteration of DNA-nucleosome topology). Component of SWI/SNF chromatin remodeling complexes that carry out key enzymatic activities, changing chromatin structure by altering DNA-histone contacts within a nucleosome in an ATP-dependent manner. Required for maximal ATPase activity of SMARCA4/BRG1/BAF190A and for association of the SMARCA4/BRG1/BAF190A containing remodeling complex BAF with chromatin/nuclear matrix. Belongs to the neural progenitors-specific chromatin remodeling complex (npBAF complex) and is required for the proliferation of neural progenitors. During neural development a switch from a stem/progenitor to a postmitotic chromatin remodeling mechanism occurs as neurons exit the cell cycle and become committed to their adult state. The transition from proliferating neural stem/progenitor cells to postmitotic neurons requires a switch in subunit composition of the npBAF and nBAF complexes. As neural progenitors exit mitosis and differentiate into neurons, npBAF complexes which contain ACTL6A/BAF53A and PHF10/BAF45A, are exchanged for homologous alternative ACTL6B/BAF53B and DPF1/BAF45B or DPF3/BAF45C subunits in neuron-specific complexes (nBAF). The npBAF complex is essential for the self-renewal/proliferative capacity of the multipotent neural stem cells. The nBAF complex along with CREST plays a role regulating the activity of genes essential for dendrite growth. Component of the NuA4 histone acetyltransferase (HAT) complex which is involved in transcriptional activation of select genes principally by acetylation of nucleosomal histones H4 and H2A. This modification may both alter nucleosome - DNA interactions and promote interaction of the modified histones with other proteins which positively regulate transcription. This complex may be required for the activation of transcriptional programs associated with oncogene and proto-oncogene mediated growth induction, tumor suppressor mediated growth arrest and replicative senescence, apoptosis, and DNA repair. NuA4 may also play a direct role in DNA repair when recruited to sites of DNA damage. Putative core component of the chromatin remodeling INO80 complex which is involved in transcriptional regulation, DNA replication and probably DNA repair. This is Actin-like protein 6A (Actl6a) from Mus musculus (Mouse).